The sequence spans 276 residues: Syntaxin-12 (276 aa).

S2 bears the N-acetylserine mark. Residues 2-248 (SYGPLDMYRN…RAAYYQKKSR (247 aa)) are Cytoplasmic-facing. The stretch at 33-131 (IQRISQATAQ…RRVSEKEKES (99 aa)) forms a coiled coil. Phosphoserine is present on residues S139, S142, S218, and S225. Positions 178-240 (LELIKERETA…ERATEQLQRA (63 aa)) constitute a t-SNARE coiled-coil homology domain. A helical; Anchor for type IV membrane protein membrane pass occupies residues 249–269 (KKMCILVLVLSVIIVILGLII). Residues 270–276 (WLVYKTK) lie on the Vesicular side of the membrane.

It belongs to the syntaxin family. As to quaternary structure, associates with the BLOC-1 complex. Interacts with BLOC1S6. Interacts with NAPA and SNAP23. Identified in a complex containing STX6, STX12, VAMP4 and VTI1A. Interacts with GRIPAP1. Forms a complex with GRIP1, GRIA2 and NSG1; controls the intracellular fate of AMPAR and the endosomal sorting of the GRIA2 subunit toward recycling and membrane targeting. Interacts with NSG1. Interacts with TPC1. Interacts (via N-terminus) with VPS13B.

Its subcellular location is the endosome membrane. It localises to the golgi apparatus membrane. The protein localises to the endomembrane system. It is found in the early endosome membrane. The protein resides in the recycling endosome membrane. SNARE promoting fusion of transport vesicles with target membranes. Together with SNARE STX6, promotes movement of vesicles from endosomes to the cell membrane, and may therefore function in the endocytic recycling pathway. Through complex formation with GRIP1, GRIA2 and NSG1 controls the intracellular fate of AMPAR and the endosomal sorting of the GRIA2 subunit toward recycling and membrane targeting. This Pongo abelii (Sumatran orangutan) protein is Syntaxin-12 (STX12).